The primary structure comprises 158 residues: SsrA-binding protein (158 aa).

It belongs to the SmpB family.

It is found in the cytoplasm. In terms of biological role, required for rescue of stalled ribosomes mediated by trans-translation. Binds to transfer-messenger RNA (tmRNA), required for stable association of tmRNA with ribosomes. tmRNA and SmpB together mimic tRNA shape, replacing the anticodon stem-loop with SmpB. tmRNA is encoded by the ssrA gene; the 2 termini fold to resemble tRNA(Ala) and it encodes a 'tag peptide', a short internal open reading frame. During trans-translation Ala-aminoacylated tmRNA acts like a tRNA, entering the A-site of stalled ribosomes, displacing the stalled mRNA. The ribosome then switches to translate the ORF on the tmRNA; the nascent peptide is terminated with the 'tag peptide' encoded by the tmRNA and targeted for degradation. The ribosome is freed to recommence translation, which seems to be the essential function of trans-translation. This chain is SsrA-binding protein, found in Roseiflexus castenholzii (strain DSM 13941 / HLO8).